A 307-amino-acid polypeptide reads, in one-letter code: Protease HtpX homolog 1 (307 aa).

2 helical membrane-spanning segments follow: residues 7–27 (LKTL…IITY) and 38–60 (IFTA…YLVG). His-133 contributes to the Zn(2+) binding site. Residue Glu-134 is part of the active site. Zn(2+) is bound at residue His-137. 2 consecutive transmembrane segments (helical) span residues 145–165 (IGMA…FLLF) and 180–200 (LILG…TFLL). Glu-212 is a Zn(2+) binding site.

This sequence belongs to the peptidase M48B family. Zn(2+) serves as cofactor.

The protein localises to the cell membrane. This is Protease HtpX homolog 1 from Sulfolobus acidocaldarius (strain ATCC 33909 / DSM 639 / JCM 8929 / NBRC 15157 / NCIMB 11770).